A 161-amino-acid polypeptide reads, in one-letter code: Pleiotrophin-A (161 aa).

Positions 1–23 (MRHQHGLFMLALLAFLFVITVLG) are cleaved as a signal peptide. 5 cysteine pairs are disulfide-bonded: Cys-41-Cys-70, Cys-49-Cys-79, Cys-56-Cys-83, Cys-93-Cys-125, and Cys-103-Cys-135. 2 chondroitin sulfate binding regions span residues 86–93 (KKQFGAEC) and 117–125 (KRALHNAEC). The tract at residues 136-161 (GKVTKPKLQESKKKKKEGKNKEKLLD) is disordered. A chondroitin sulfate A binding region spans residues 141-161 (PKLQESKKKKKEGKNKEKLLD).

It belongs to the pleiotrophin family. Expressed in high levels in brain and eye. Lower levels in bone. In the tailbud embryo stage, it is expressed exclusively in the central nervous system, especially in the hind region of the brain.

It localises to the secreted. Its function is as follows. Secreted growth factor that mediates its signal through cell-surface proteoglycan and non-proteoglycan receptors. Binds cell-surface proteoglycan receptor via their chondroitin sulfate (CS) groups. Thereby regulates many processes like cell proliferation, cell survival, cell growth, cell differentiation and cell migration. Has antibacterial activity against both Gram-positive and Gram-negative bacteria. The polypeptide is Pleiotrophin-A (ptn-a) (Xenopus laevis (African clawed frog)).